The following is a 251-amino-acid chain: Probable transcriptional regulatory protein TGRD_462 (251 aa).

This sequence belongs to the TACO1 family.

The protein localises to the cytoplasm. This chain is Probable transcriptional regulatory protein TGRD_462, found in Endomicrobium trichonymphae.